We begin with the raw amino-acid sequence, 484 residues long: Pre-glycoprotein polyprotein GP complex (484 aa).

Gly2 is lipidated: N-myristoyl glycine; by host. The Extracellular segment spans residues 2-17 (GQLVSFFQEIPNIIQE). The chain crosses the membrane as a helical span at residues 18-33 (AINIALIAVSLIAILK). Topologically, residues 34 to 58 (GLVNLWKSGLFQLLVFLILAGRSCS) are cytoplasmic. Cys57 contacts Zn(2+). The Extracellular segment spans residues 59-423 (FKIGRSTELQ…QGKTPITLVD (365 aa)). Disulfide bonds link Cys85–Cys225, Cys270–Cys283, Cys292–Cys301, and Cys355–Cys376. Residues Asn88, Asn125, Asn178, and Asn218 are each glycosylated (N-linked (GlcNAc...) asparagine; by host). 4 N-linked (GlcNAc...) asparagine; by host glycosylation sites follow: Asn356, Asn364, Asn381, and Asn386. The helical transmembrane segment at 424 to 444 (ICFWSTLFFTTTLFLHLVGFP) threads the bilayer. Topologically, residues 445–484 (THRHIQGEPCPLPHKLNSNGGCRCGRYPELKKPTTWHRKH) are cytoplasmic. His446, His448, Cys454, His458, Cys466, Cys468, and His484 together coordinate Zn(2+).

It belongs to the arenaviridae GPC protein family. In terms of assembly, interacts with glycoprotein G2. Part of the GP complex (GP-C) together with glycoprotein G1 and glycoprotein G2. The GP-complex interacts with protein Z, which interacts with ribonucleocapsid; these interactions may induce virion budding. As to quaternary structure, homotrimer; disulfide-linked. In pre-fusion state, G1 homotrimers bind G2 homotrimers via ionic interactions. Part of the GP complex (GP-C) together with glycoprotein G2 and the stable signal peptide. The GP-complex interacts with protein Z, which interacts with ribonucleocapsid; these interactions may induce virion budding. Homotrimer. Interacts with the stable signal peptide. In pre-fusion state, G2 homotrimers bind G1 homotrimers via ionic interactions. Part of the GP complex (GP-C) together with glycoprotein G1 and the stable signal peptide. Acidification in the endosome triggers rearrangements, which ultimately leads to a 6 helix bundle formed by the two heptad repeat domains (HR1 and HR2) in post-fusion state. The GP-complex interacts with protein Z, which interacts with ribonucleocapsid; these interactions may induce virion budding. In terms of processing, specific enzymatic cleavages in vivo yield mature proteins. GP-C polyprotein is cleaved in the endoplasmic reticulum by the host protease MBTPS1. Only cleaved glycoprotein is incorporated into virions. Post-translationally, the SSP remains stably associated with the GP complex following cleavage by signal peptidase and plays crucial roles in the trafficking of GP through the secretory pathway. Myristoylation is necessary for GP2-mediated fusion activity.

The protein resides in the virion membrane. Its subcellular location is the host endoplasmic reticulum membrane. It is found in the host Golgi apparatus membrane. The protein localises to the host cell membrane. Functions as a cleaved signal peptide that is retained as the third component of the GP complex (GP-C). Helps to stabilize the spike complex in its native conformation. The SSP is required for efficient glycoprotein expression, post-translational maturation cleavage of G1 and G2, glycoprotein transport to the cell surface plasma membrane, formation of infectious virus particles, and acid pH-dependent glycoprotein-mediated cell fusion. Functionally, glycoprotein G1: Forms the virion spikes together with glycoprotein G2. The glycoprotein spike trimers are connected to the underlying matrix. Interacts with the host receptor leading to virus endocytosis. Its function is as follows. Forms the virion spikes together with glycoprotein G1. The glycoprotein spike trimers are connected to the underlying matrix. Class I viral fusion protein that directs fusion of viral and host endosomal membranes, leading to delivery of the nucleocapsid into the cytoplasm. Membrane fusion is mediated by irreversible conformational changes induced by acidification. The chain is Pre-glycoprotein polyprotein GP complex from Chapare mammarenavirus (isolate Human/Bolivia/810419/2003).